The following is a 684-amino-acid chain: MANSQPKASQQRQAKVMTAAAGSASRVAVPLLLCALLVPGGAYVLDDSDGLGREFDGIGAVSGGGATSRLLVNYPEPYRSEILDYLFKPNFGASLHILKVEIGGDGQTTDGTEPSHMHYELDENYFRGYEWWLMKEAKKRNPDIILMGLPWSFPGWLGKGFSWPYVNLQLTAYYVVRWILGAKHYHDLDIDYIGIWNERPFDANYIKELRKMLDYQGLQRVRIIASDNLWEPISSSLLLDQELWKVVDVIGAHYPGTYTVWNAKMSGKKLWSSEDFSTINSNVGAGCWSRILNQNYINGNMTSTIAWNLVASYYEELPYGRSGLMTAQEPWSGHYVVASPIWVSAHTTQFTQPGWYYLKTVGHLEKGGSYVALTDGLGNLTIIIETMSHQHSMCIRPYLPYYNVSHQLATFTLKGSLREIQELQVWYTKLGTPQQRLHFKQLDTLWLLDGSGSFTLELEEDEIFTLTTLTTGRKGSYPPPPSSKPFPTNYKDDFNVEYPLFSEAPNFADQTGVFEYYMNNEDREHRFTLRQVLNQRPITWAADASSTISVIGDHHWTNMTVQCDVYIETPRSGGVFIAGRVNKGGILIRSATGVFFWIFANGSYRVTADLGGWITYASGHADVTAKRWYTLTLGIKGYFAFGMLNGTILWKNVRVKYPGHGWAAIGTHTFEFAQFDNFRVEAAR.

The first 42 residues, 1–42 (MANSQPKASQQRQAKVMTAAAGSASRVAVPLLLCALLVPGGA), serve as a signal peptide directing secretion. The substrate site is built by Thr109, Trp151, and Asn197. The active-site Proton donor/acceptor is Glu198. Glu274 functions as the Nucleophile in the catalytic mechanism. Cys287 and Cys394 are oxidised to a cystine. Residues Asn300 and Asn379 are each glycosylated (N-linked (GlcNAc...) asparagine). Arg396 is a substrate binding site. N-linked (GlcNAc...) asparagine glycosylation is found at Asn403, Asn558, Asn601, and Asn645.

The protein belongs to the glycosyl hydrolase 59 family. As to expression, detected in brain and kidney.

It localises to the lysosome. The catalysed reaction is a beta-D-galactosyl-(1&lt;-&gt;1')-N-acylsphing-4-enine + H2O = an N-acylsphing-4-enine + D-galactose. It catalyses the reaction a D-galactosylceramide + H2O = an N-acyl-sphingoid base + D-galactose. It carries out the reaction beta-D-galactosyl-(1&lt;-&gt;1)-sphing-4-enine + H2O = sphing-4-enine + D-galactose. In terms of biological role, hydrolyzes the galactose ester bonds of glycolipids such as galactosylceramide and galactosylsphingosine. Enzyme with very low activity responsible for the lysosomal catabolism of galactosylceramide, a major lipid in myelin, kidney and epithelial cells of small intestine and colon. This is Galactocerebrosidase from Mus musculus (Mouse).